A 673-amino-acid polypeptide reads, in one-letter code: Translation factor GUF1 homolog, mitochondrial (673 aa).

A tr-type G domain is found at 68–260 (ERIRNFSIIA…AVIERIPSPP (193 aa)). GTP is bound by residues 77–84 (AHVDHGKS), 153–157 (DTPGH), and 207–210 (NKID).

Belongs to the TRAFAC class translation factor GTPase superfamily. Classic translation factor GTPase family. LepA subfamily.

Its subcellular location is the mitochondrion inner membrane. It carries out the reaction GTP + H2O = GDP + phosphate + H(+). Promotes mitochondrial protein synthesis. May act as a fidelity factor of the translation reaction, by catalyzing a one-codon backward translocation of tRNAs on improperly translocated ribosomes. Binds to mitochondrial ribosomes in a GTP-dependent manner. The chain is Translation factor GUF1 homolog, mitochondrial from Ricinus communis (Castor bean).